The chain runs to 2304 residues: MGFTCPNSDCLYSRSEWSNRALREEGLSFSMRCPGACCGAMLVRKQQEPEAVDQRHSPERVRIAPHQNVCAGLPGVGPSKCPKHSQVPLAPKSKSVPARATVSASPLKKQHCDVVVTVGPPADLELVYPALVSKGSANPPKVGKKSFNEALLEKRAAYQVRTAVPPPGPIRVVKTAATPVKVEKVRFPKGAVAFNGANFIDAKGYVVLSAGALKILRGVQKLRRQQARSARRMAACRRVRLAVFAARLPSLLRKADEATSGGFKYVDLNAPRVVRKAEKRPKKKPAKKAVRPASPVEEEINWDDFIIPESERTASPMKEEKPKRSLVPNSLGFGWWRPASGNLWDVVSQCQRACEGTFLEASAEACLVRAGVDDVALSVWARISKSVVQLSAYYDVNTLLENYTALSECTMDELQSVAVQLDSEYQELGPPTHFTCGLSNWARGAGKILYNFVAPTVEGIAGAGCRIVERAYELSKTVIDEIFSKMKSLFYDCFGNLFGHLNVLLSTIDSFWARASTWIMNILEKTHDCLKVLRDSAVWSLLLILVGGLILLSERFLQSIGIISKPGTILGIFLATFLGIFGYTFFRKDDTLVSDLLCAFKIAITNLFRTKPGPPGSPIIVDGDVVIPESAVAMSTCSFMGGLDIAIAAIGNVGASILGFKVGALQYAAKIATCLDQLRKGKDVLKEMTCWIIETLGALWNKMTGREATFFDEVSAIVAVDIREWLEESQNLCLAAQTFSIGDKIVLEQCERLIADGHKLLRGMGDADRKLSSSFLSTVQRKVSDLEKIHTQSVRAGYFEGRRMEPFWVYIHGPSHCGKSLLMEPMSRELLRAGGFSESSIYTKNSCDKYWSRYRRQACVQIDDLSAGKTDPSLESQLINLVASKEVPLDMAEVEDKGILFDSAILVTSSNTAHVPTNANVNHAEAYKNRMNVVIQCRRKPEYSPMGMELEGTFQPFDPRNPQASIECMLQHRETHAPITGWISAGAAMAEAVNQFRLHREKEMILQSNHLSSFRPAHPIYTECATFLSMYARDASFVPPVDLGCKWEIPSGYMTIAAVDGRVFGFSQLGVCTEISKQMKFTEEMEQYTLDKFAPDITKTMASQSRFKLVGAFLKGMIREEDNVVSLTSLGPKSTATQREFFETLGLAERVYLRAVQKKVNKIRTDPAFDVEALHARLLSTIATSYEYVRTYGPKIFPILMGFVCVVFACYGFIMPLLSFASGGSAVGGMVAMEQIAAASVVSSGSSPVAHRNRAPPVQPRYARHRLAGASAEDAYAYEEMMVVLYVDSTVAPVVNAVRGPGRQFFNSHQALMIPNNSTVVAHFSTRDVVEIHWEHDVVRKGEKKDTEIIQYRCPSIPELPSRCKKYFEYDLERDFPGPFTLDASCYRMQSPGKIDIELVSWTDHDRELRTRPLVIADPFGEDRYRREIPQYIQYGRPDQLHDCGAICVAKIGGQHRIVGLVISTDKHNTGVGLLPSALHMTTCSLSYVPEEWEEAPRGLKKLGWNDRSELPHMPRKTQYVAVNEDLAIPFDNPKIPSVLVSDDPRTVGTPVEGKDPVLVAMEKFYEPMTDFTEEEVRPGQTEVSLFEQVCDDIVQTWFDAGAEFEDVEDDVVINGDDDFDKLIMDTSEGYPYVLERTHGEKGKTRYFEGGPGAYTLKPGTSVYNDYHKLQEEVQVEGGIPEMVCIECPKDELLVERKVLQKLGTRNFEILELPKNMLFRKKFLHWALFLSDMRWCLPCQVGIVVQGREWGLLMDRLAAKNSVAYNCDYSKFDGLMSCQVLDAIGKMVNKCYSNANPNLKKKGKGELPGSPPQLARYNLLMSIFGRKCLARSQVFEVRGGIRRGALTVLLNSVFNEILIRYVYKTVIPSPEFNRFETFVTLVVYGDDNLIAVDPSMQKIFTGEVIKKTLARKKITITDGSDKLSPVLEAKPLAQLDFLKRSFLVSDSGQVMPALDRTCIYSSLLYLRSADCDPIPLLHQNVQNALQELYYRQDREEFDNLRTFYLERLPMWRNGQHRLLDWNQCAEHWRARYTGCPSDNPAGVLDMLVDPRCKSFMLPAGPANWSMPIADRIFVCGPKFSASGPSYTLCFNRLAAGETGVQIKPVHAATQGAMPTAKFVESFRSIKKRPELELAISAYESGSNLYFKGCAPYNDIWACAISFCSAFGYAQKQVLLHMYDNCKRLGASSLRSYFNKSLVGDGCARRCEIHTTPAIAKQVERLLPQVQCKHCEYDPEFASKPTTQLRKCTDPGVDGGKAMYIVRGLGRTAAKLVCSDICDGHLMSCNTSFDKMVVNLFRRSCFKCL.

The Cytoplasmic segment spans residues 588–1195; sequence KDDTLVSDLL…YEYVRTYGPK (608 aa). An SF3 helicase domain is found at 786–950; it reads LEKIHTQSVR…PEYSPMGMEL (165 aa). 813–820 lines the ATP pocket; it reads GPSHCGKS. A helical membrane pass occupies residues 1196-1216; the sequence is IFPILMGFVCVVFACYGFIMP. The Lumenal segment spans residues 1217–1243; it reads LLSFASGGSAVGGMVAMEQIAAASVVS. Residues 1269-1482 enclose the Peptidase C3 domain; it reads GASAEDAYAY…GLLPSALHMT (214 aa). Active-site for picornain 3C-like protease activity residues include His-1309, Glu-1348, and Cys-1444. One can recognise a RdRp catalytic domain in the interval 1762–1900; the sequence is SVAYNCDYSK…AVDPSMQKIF (139 aa).

The protein belongs to the nepoviruses RNA1 polyprotein family. Post-translationally, specific enzymatic cleavages by picornain 3C-like protease in vivo yield mature proteins. Picornain 3C-like protease is autocatalytically processed. In terms of processing, VPg is uridylylated by the polymerase and is covalently linked to the 5'-end of genomic RNA. This uridylylated form acts as a nucleotide-peptide primer for the polymerase.

The protein localises to the host endoplasmic reticulum lumen. It is found in the host endoplasmic reticulum membrane. It carries out the reaction RNA(n) + a ribonucleoside 5'-triphosphate = RNA(n+1) + diphosphate. Its function is as follows. Picornain 3C-like protease is a thiol protease that cleaves the P1 and P2 polyproteins. This is RNA1 polyprotein from Tobacco ringspot virus (TobRV).